We begin with the raw amino-acid sequence, 101 residues long: Movement protein (101 aa).

Residues 30 to 50 traverse the membrane as a helical segment; sequence EVAILSFVALICFYLLYLWVL. Residues 75-101 are disordered; sequence VDRSNPIPNLPAPPSQGNPGPFVPGTG.

Belongs to the mastrevirus movement protein family. In terms of assembly, interacts with the capsid protein (CP). Part of a MP-CP-viral DNA complex.

The protein resides in the host membrane. Functionally, involved in the viral transport within, and between cells. In Maize streak virus genotype A (isolate South Africa) (MSV), this protein is Movement protein.